The following is a 391-amino-acid chain: GTPase Obg (391 aa).

One can recognise an Obg domain in the interval 1–159 (MKFVDEASIL…RDLLLELMLL (159 aa)). Residues 127–147 (NTRFKSSVNRTPRQKTNGTPG) form a disordered region. A compositionally biased stretch (polar residues) spans 129 to 145 (RFKSSVNRTPRQKTNGT). The region spanning 160–333 (ADVGMLGMPN…LCWDVMTFII (174 aa)) is the OBG-type G domain. GTP-binding positions include 166-173 (GMPNAGKS), 191-195 (FTTLV), 213-216 (DIPG), 283-286 (NKID), and 314-316 (SAA). Residues S173 and T193 each coordinate Mg(2+).

Belongs to the TRAFAC class OBG-HflX-like GTPase superfamily. OBG GTPase family. In terms of assembly, monomer. Mg(2+) is required as a cofactor.

It is found in the cytoplasm. Its function is as follows. An essential GTPase which binds GTP, GDP and possibly (p)ppGpp with moderate affinity, with high nucleotide exchange rates and a fairly low GTP hydrolysis rate. Plays a role in control of the cell cycle, stress response, ribosome biogenesis and in those bacteria that undergo differentiation, in morphogenesis control. This is GTPase Obg from Salmonella arizonae (strain ATCC BAA-731 / CDC346-86 / RSK2980).